The chain runs to 181 residues: ATP synthase subunit delta (181 aa).

It belongs to the ATPase delta chain family. As to quaternary structure, F-type ATPases have 2 components, F(1) - the catalytic core - and F(0) - the membrane proton channel. F(1) has five subunits: alpha(3), beta(3), gamma(1), delta(1), epsilon(1). F(0) has three main subunits: a(1), b(2) and c(10-14). The alpha and beta chains form an alternating ring which encloses part of the gamma chain. F(1) is attached to F(0) by a central stalk formed by the gamma and epsilon chains, while a peripheral stalk is formed by the delta and b chains.

The protein resides in the cell inner membrane. Functionally, f(1)F(0) ATP synthase produces ATP from ADP in the presence of a proton or sodium gradient. F-type ATPases consist of two structural domains, F(1) containing the extramembraneous catalytic core and F(0) containing the membrane proton channel, linked together by a central stalk and a peripheral stalk. During catalysis, ATP synthesis in the catalytic domain of F(1) is coupled via a rotary mechanism of the central stalk subunits to proton translocation. This protein is part of the stalk that links CF(0) to CF(1). It either transmits conformational changes from CF(0) to CF(1) or is implicated in proton conduction. This is ATP synthase subunit delta from Desulfotalea psychrophila (strain LSv54 / DSM 12343).